Consider the following 626-residue polypeptide: Colicin-Ia (626 aa).

The translocation (T) stretch occupies residues 23–225 (EIMAVDIYVN…TRLSELEKNG (203 aa)). A compositionally biased stretch (polar residues) spans 276–286 (QQLTQQKNTPD). The tract at residues 276-308 (QQLTQQKNTPDGKTIVSPEKFPGRSSTNHSIVV) is disordered. Residues 282 to 385 (KNTPDGKTIV…LRQRLLDARN (104 aa)) form a receptor-binding (R) region. Residues 450 to 626 (KDAINFTTEF…VEKANKFWGI (177 aa)) form a channel (C) region. 2 consecutive transmembrane segments (helical) span residues 580 to 594 (ATAL…LTGS) and 597 to 612 (GIIG…GALI).

Belongs to the channel forming colicin family.

The protein localises to the cell membrane. In terms of biological role, this colicin is a channel-forming colicin. This class of transmembrane toxins depolarize the cytoplasmic membrane, leading to dissipation of cellular energy. Colicins are polypeptide toxins produced by and active against E.coli and closely related bacteria. This Escherichia coli protein is Colicin-Ia (cia).